The sequence spans 294 residues: Acetyl-coenzyme A carboxylase carboxyl transferase subunit beta (294 aa).

The 265-residue stretch at Ile-30 to Glu-294 folds into the CoA carboxyltransferase N-terminal domain. Residues Cys-34, Cys-37, Cys-53, and Cys-56 each coordinate Zn(2+). Residues Cys-34–Cys-56 form a C4-type zinc finger.

This sequence belongs to the AccD/PCCB family. As to quaternary structure, acetyl-CoA carboxylase is a heterohexamer composed of biotin carboxyl carrier protein (AccB), biotin carboxylase (AccC) and two subunits each of ACCase subunit alpha (AccA) and ACCase subunit beta (AccD). It depends on Zn(2+) as a cofactor.

The protein localises to the cytoplasm. It carries out the reaction N(6)-carboxybiotinyl-L-lysyl-[protein] + acetyl-CoA = N(6)-biotinyl-L-lysyl-[protein] + malonyl-CoA. It participates in lipid metabolism; malonyl-CoA biosynthesis; malonyl-CoA from acetyl-CoA: step 1/1. In terms of biological role, component of the acetyl coenzyme A carboxylase (ACC) complex. Biotin carboxylase (BC) catalyzes the carboxylation of biotin on its carrier protein (BCCP) and then the CO(2) group is transferred by the transcarboxylase to acetyl-CoA to form malonyl-CoA. The chain is Acetyl-coenzyme A carboxylase carboxyl transferase subunit beta from Listeria monocytogenes serotype 4b (strain F2365).